A 458-amino-acid chain; its full sequence is Glycogen synthase (458 aa).

Lys15 is a binding site for ADP-alpha-D-glucose.

It belongs to the glycosyltransferase 1 family. Bacterial/plant glycogen synthase subfamily.

The catalysed reaction is [(1-&gt;4)-alpha-D-glucosyl](n) + ADP-alpha-D-glucose = [(1-&gt;4)-alpha-D-glucosyl](n+1) + ADP + H(+). It functions in the pathway glycan biosynthesis; glycogen biosynthesis. Functionally, synthesizes alpha-1,4-glucan chains using ADP-glucose. The polypeptide is Glycogen synthase (Gloeobacter violaceus (strain ATCC 29082 / PCC 7421)).